The sequence spans 238 residues: Pyruvate formate-lyase-activating enzyme (238 aa).

Positions 15–236 (VDGPGIRTVV…KKLEKYLKEL (222 aa)) constitute a Radical SAM core domain. Cys-29, Cys-33, and Cys-36 together coordinate [4Fe-4S] cluster. S-adenosyl-L-methionine is bound by residues 35–37 (YCH), Gly-78, 126–128 (DIK), and His-199.

The protein belongs to the organic radical-activating enzymes family. [4Fe-4S] cluster serves as cofactor.

It localises to the cytoplasm. The enzyme catalyses glycyl-[formate C-acetyltransferase] + reduced [flavodoxin] + S-adenosyl-L-methionine = glycin-2-yl radical-[formate C-acetyltransferase] + semiquinone [flavodoxin] + 5'-deoxyadenosine + L-methionine + H(+). Its function is as follows. Activation of pyruvate formate-lyase under anaerobic conditions by generation of an organic free radical, using S-adenosylmethionine and reduced flavodoxin as cosubstrates to produce 5'-deoxy-adenosine. The protein is Pyruvate formate-lyase-activating enzyme (act) of Clostridium pasteurianum.